The sequence spans 160 residues: Large ribosomal subunit protein uL16 (160 aa).

It belongs to the universal ribosomal protein uL16 family. Part of the 50S ribosomal subunit.

Functionally, binds 23S rRNA and is also seen to make contacts with the A and possibly P site tRNAs. The protein is Large ribosomal subunit protein uL16 of Prochlorococcus marinus (strain MIT 9301).